The sequence spans 747 residues: MRSLTAAARRPEVLLLLLCILQPSQPGGVPGAVPGGVPGGVFFPGAGLGGLGVGGLGPGVKPAKPGVGGLVGPGLGAEGSALPGAFPGGFFGAGGGAAGAAAAYKAAAKAGAAGLGVGGIGGVGGLGVSTGAVVPQLGAGVGAGVKPGKVPGVGLPGVYPGGVLPGAGARFPGIGVLPGVPTGAGVKPKAQVGAGAFAGIPGVGPFGGQQPGLPLGYPIKAPKLPAGYGLPYKTGKLPYGFGPGGVAGSAGKAGYPTGTGVGPQAAAAAAKAAAKLGAGGAGVLPGVGVGGPGIPGAPGAIPGIGGIAGVGAPDAAAAAAAAAKAAKFGAAGGLPGVGVPGVGVPGVGVPGVGVPGVGVPGVGVPGVGVPGVGVPGVGVPGVGVPGVGVPGALSPAATAKAAAKAAKFGARGAVGIGGIPTFGLGPGGFPGIGDAAAAPAAAAAKAAKIGAGGVGALGGVVPGAPGAIPGLPGVGGVPGVGIPAAAAAKAAAKAAQFGLGPGVGVAPGVGVVPGVGVVPGVGVAPGIGLGPGGVIGAGVPAAAKSAAKAAAKAQFRAAAGLPAGVPGLGVGAGVPGLGVGAGVPGLGVGAGVPGPGAVPGTLAAAKAAKFGPGGVGALGGVGDLGGAGIPGGVAGVVPAAAAAAKAAAKAAQFGLGGVGGLGVGGLGAVPGAVGLGGVSPAAAAKAAKFGAAGLGGVLGAGQPFPIGGGAGGLGVGGKPPKPFGGALGALGFPGGACLGKSCGRKRK.

The signal sequence occupies residues 1–26; the sequence is MRSLTAAARRPEVLLLLLCILQPSQP. A 4-hydroxyproline mark is found at Pro34, Pro65, and Pro87. Allysine is present on residues Lys105 and Lys109. 4-hydroxyproline occurs at positions 165, 178, and 181. Residue Pro188 is modified to Hydroxyproline. Position 201 is a 4-hydroxyproline (Pro201). Allysine is present on residues Lys252, Lys271, and Lys275. 4-hydroxyproline is present on residues Pro298 and Pro302. Allysine occurs at positions 324 and 327. 6 positions are modified to 4-hydroxyproline: Pro335, Pro365, Pro370, Pro375, Pro380, and Pro385. Allysine occurs at positions 400, 404, 407, 445, and 448. A 4-hydroxyproline mark is found at Pro462 and Pro478. Allysine occurs at positions 489 and 493. Pro513 is subject to 4-hydroxyproline. 3 positions are modified to allysine: Lys544, Lys548, and Lys552. A 4-hydroxyproline mark is found at Pro566, Pro575, Pro584, Pro593, and Pro599. Allysine occurs at positions 606 and 609. The residue at position 630 (Pro630) is a 4-hydroxyproline. Allysine is present on residues Lys645, Lys649, Lys685, and Lys688. 4-hydroxyproline is present on residues Pro719 and Pro733. An intrachain disulfide couples Cys737 to Cys742.

It belongs to the elastin family. As to quaternary structure, the polymeric elastin chains are cross-linked together into an extensible 3D network. Forms a ternary complex with BGN and MFAP2. Interacts with MFAP2 via divalent cations (calcium &gt; magnesium &gt; manganese) in a dose-dependent and saturating manner. Interacts with FBLN5 and FBN1. Forms a ternary complex with FBN1 and FBLN2 or FBLN5. Interacts with MFAP4 in a Ca (2+)-dependent manner; this interaction promotes ELN self-assembly. Interacts with EFEMP2 with moderate affinity. Post-translationally, elastin is formed through the cross-linking of its soluble precursor tropoelastin. Cross-linking is initiated through the action of lysyl oxidase on exposed lysines to form allysine. Subsequent spontaneous condensation reactions with other allysine or unmodified lysine residues result in various bi-, tri-, and tetrafunctional cross-links. The most abundant cross-links in mature elastin fibers are lysinonorleucine, allysine aldol, desmosine, and isodesmosine. In terms of processing, hydroxylation on proline residues within the sequence motif, GXPG, is most likely to be 4-hydroxy as this fits the requirement for 4-hydroxylation in vertebrates.

The protein resides in the secreted. The protein localises to the extracellular space. Its subcellular location is the extracellular matrix. Functionally, major structural protein of tissues such as aorta and nuchal ligament, which must expand rapidly and recover completely. Molecular determinant of the late arterial morphogenesis, stabilizing arterial structure by regulating proliferation and organization of vascular smooth muscle. In Bos taurus (Bovine), this protein is Elastin (ELN).